We begin with the raw amino-acid sequence, 108 residues long: E3 ubiquitin-protein ligase Midline-1 (108 aa).

The region spanning 1 to 100 (KSAPKHEWIG…IITGLPIPDH (100 aa)) is the B30.2/SPRY domain.

This sequence belongs to the TRIM/RBCC family. In terms of assembly, homodimer or heterodimer with MID2. Interacts with IGBP1.

It localises to the cytoplasm. The protein localises to the cytoskeleton. The catalysed reaction is S-ubiquitinyl-[E2 ubiquitin-conjugating enzyme]-L-cysteine + [acceptor protein]-L-lysine = [E2 ubiquitin-conjugating enzyme]-L-cysteine + N(6)-ubiquitinyl-[acceptor protein]-L-lysine.. Functionally, has E3 ubiquitin ligase activity towards IGBP1, promoting its monoubiquitination, which results in deprotection of the catalytic subunit of protein phosphatase PP2A, and its subsequent degradation by polyubiquitination. The polypeptide is E3 ubiquitin-protein ligase Midline-1 (Mid1) (Mus caroli (Ryukyu mouse)).